Here is a 174-residue protein sequence, read N- to C-terminus: Peptide deformylase (174 aa).

Cys-94 and His-136 together coordinate Fe cation. Residue Glu-137 is part of the active site. Residue His-140 participates in Fe cation binding.

Belongs to the polypeptide deformylase family. Fe(2+) serves as cofactor.

It catalyses the reaction N-terminal N-formyl-L-methionyl-[peptide] + H2O = N-terminal L-methionyl-[peptide] + formate. In terms of biological role, removes the formyl group from the N-terminal Met of newly synthesized proteins. Requires at least a dipeptide for an efficient rate of reaction. N-terminal L-methionine is a prerequisite for activity but the enzyme has broad specificity at other positions. In Rhizobium meliloti (strain 1021) (Ensifer meliloti), this protein is Peptide deformylase.